We begin with the raw amino-acid sequence, 333 residues long: Flap endonuclease 1 (333 aa).

Residues Met1–Arg99 form an N-domain region. Residues Asp28, Asp81, Glu153, Glu155, Asp174, Asp176, and Asp235 each contribute to the Mg(2+) site. Positions Glu117–Gly256 are I-domain. The tract at residues Gly325–Phe333 is interaction with PCNA.

The protein belongs to the XPG/RAD2 endonuclease family. FEN1 subfamily. In terms of assembly, interacts with PCNA. PCNA stimulates the nuclease activity without altering cleavage specificity. Requires Mg(2+) as cofactor.

Its function is as follows. Structure-specific nuclease with 5'-flap endonuclease and 5'-3' exonuclease activities involved in DNA replication and repair. During DNA replication, cleaves the 5'-overhanging flap structure that is generated by displacement synthesis when DNA polymerase encounters the 5'-end of a downstream Okazaki fragment. Binds the unpaired 3'-DNA end and kinks the DNA to facilitate 5' cleavage specificity. Cleaves one nucleotide into the double-stranded DNA from the junction in flap DNA, leaving a nick for ligation. Also involved in the base excision repair (BER) pathway. Acts as a genome stabilization factor that prevents flaps from equilibrating into structures that lead to duplications and deletions. Also possesses 5'-3' exonuclease activity on nicked or gapped double-stranded DNA. The sequence is that of Flap endonuclease 1 from Methanoregula boonei (strain DSM 21154 / JCM 14090 / 6A8).